Consider the following 334-residue polypeptide: Lipoyl synthase (334 aa).

Positions 8–33 (LNNDTRPKVEAPARPRHPEKAHRPDT) are disordered. Over residues 12–33 (TRPKVEAPARPRHPEKAHRPDT) the composition is skewed to basic and acidic residues. [4Fe-4S] cluster contacts are provided by Cys68, Cys73, Cys79, Cys94, Cys98, Cys101, and Ser307. A Radical SAM core domain is found at 80–296 (WEKRHATFMI…ETTAYAKGFL (217 aa)).

It belongs to the radical SAM superfamily. Lipoyl synthase family. [4Fe-4S] cluster is required as a cofactor.

It localises to the cytoplasm. The catalysed reaction is [[Fe-S] cluster scaffold protein carrying a second [4Fe-4S](2+) cluster] + N(6)-octanoyl-L-lysyl-[protein] + 2 oxidized [2Fe-2S]-[ferredoxin] + 2 S-adenosyl-L-methionine + 4 H(+) = [[Fe-S] cluster scaffold protein] + N(6)-[(R)-dihydrolipoyl]-L-lysyl-[protein] + 4 Fe(3+) + 2 hydrogen sulfide + 2 5'-deoxyadenosine + 2 L-methionine + 2 reduced [2Fe-2S]-[ferredoxin]. The protein operates within protein modification; protein lipoylation via endogenous pathway; protein N(6)-(lipoyl)lysine from octanoyl-[acyl-carrier-protein]: step 2/2. Catalyzes the radical-mediated insertion of two sulfur atoms into the C-6 and C-8 positions of the octanoyl moiety bound to the lipoyl domains of lipoate-dependent enzymes, thereby converting the octanoylated domains into lipoylated derivatives. The polypeptide is Lipoyl synthase (Methylorubrum populi (strain ATCC BAA-705 / NCIMB 13946 / BJ001) (Methylobacterium populi)).